A 273-amino-acid chain; its full sequence is Eukaryotic translation initiation factor 3 subunit G-2 (273 aa).

The interval 168-192 (PPFMKDGGGGSGGKNWGRGRDRDDS) is disordered. Positions 173-183 (DGGGGSGGKNW) are enriched in gly residues. An RRM domain is found at 193-271 (SAVRISNLSE…LILCVEWSKP (79 aa)).

The protein belongs to the eIF-3 subunit G family. In terms of assembly, component of the eukaryotic translation initiation factor 3 (eIF-3) complex. The eIF-3 complex interacts with pix.

The protein localises to the cytoplasm. RNA-binding component of the eukaryotic translation initiation factor 3 (eIF-3) complex, which is involved in protein synthesis of a specialized repertoire of mRNAs and, together with other initiation factors, stimulates binding of mRNA and methionyl-tRNAi to the 40S ribosome. The eIF-3 complex specifically targets and initiates translation of a subset of mRNAs involved in cell proliferation. This subunit can bind 18S rRNA. The sequence is that of Eukaryotic translation initiation factor 3 subunit G-2 from Drosophila erecta (Fruit fly).